Here is a 436-residue protein sequence, read N- to C-terminus: 3-ketoacyl-CoA thiolase (436 aa).

The active-site Acyl-thioester intermediate is C99. Active-site proton acceptor residues include H392 and C422.

The protein belongs to the thiolase-like superfamily. Thiolase family. As to quaternary structure, heterotetramer of two alpha chains (FadJ) and two beta chains (FadI).

Its subcellular location is the cytoplasm. The enzyme catalyses an acyl-CoA + acetyl-CoA = a 3-oxoacyl-CoA + CoA. Its pathway is lipid metabolism; fatty acid beta-oxidation. Its function is as follows. Catalyzes the final step of fatty acid oxidation in which acetyl-CoA is released and the CoA ester of a fatty acid two carbons shorter is formed. The protein is 3-ketoacyl-CoA thiolase of Shewanella woodyi (strain ATCC 51908 / MS32).